A 102-amino-acid polypeptide reads, in one-letter code: NADH-quinone oxidoreductase subunit K (102 aa).

A run of 3 helical transmembrane segments spans residues 5 to 25 (IAHY…GIFL), 31 to 51 (IVIL…FVAF), and 66 to 86 (FVLT…VVFF).

It belongs to the complex I subunit 4L family. As to quaternary structure, NDH-1 is composed of 14 different subunits. Subunits NuoA, H, J, K, L, M, N constitute the membrane sector of the complex.

The protein resides in the cell inner membrane. The catalysed reaction is a quinone + NADH + 5 H(+)(in) = a quinol + NAD(+) + 4 H(+)(out). Functionally, NDH-1 shuttles electrons from NADH, via FMN and iron-sulfur (Fe-S) centers, to quinones in the respiratory chain. The immediate electron acceptor for the enzyme in this species is believed to be ubiquinone. Couples the redox reaction to proton translocation (for every two electrons transferred, four hydrogen ions are translocated across the cytoplasmic membrane), and thus conserves the redox energy in a proton gradient. The sequence is that of NADH-quinone oxidoreductase subunit K from Mesorhizobium japonicum (strain LMG 29417 / CECT 9101 / MAFF 303099) (Mesorhizobium loti (strain MAFF 303099)).